The primary structure comprises 254 residues: Proteasome subunit alpha (254 aa).

A disordered region spans residues 231–254 (ESGAASADGEAETEAETDSGSDEE). A compositionally biased stretch (acidic residues) spans 239–254 (GEAETEAETDSGSDEE).

This sequence belongs to the peptidase T1A family. The 20S proteasome core is composed of 14 alpha and 14 beta subunits that assemble into four stacked heptameric rings, resulting in a barrel-shaped structure. The two inner rings, each composed of seven catalytic beta subunits, are sandwiched by two outer rings, each composed of seven alpha subunits. The catalytic chamber with the active sites is on the inside of the barrel. Has probably a gated structure, the ends of the cylinder being occluded by the N-termini of the alpha-subunits. Is likely capped by the proteasome-associated ATPase, ARC. The N-terminus is blocked.

It is found in the cytoplasm. The protein operates within protein degradation; proteasomal Pup-dependent pathway. The formation of the proteasomal ATPase ARC-20S proteasome complex, likely via the docking of the C-termini of ARC into the intersubunit pockets in the alpha-rings, may trigger opening of the gate for substrate entry. Interconversion between the open-gate and close-gate conformations leads to a dynamic regulation of the 20S proteasome proteolysis activity. Peptidolytic activity is completely inhibited by lactacystin, and to a lesser extent, by N-acetyl-Leu-Leu-norleucinal (Ac-LLnL) and benzoyloxycarbonyl-Leu-Leu-Leu-vinylsulfone (Z-LLL-VS) in vitro. In terms of biological role, component of the proteasome core, a large protease complex with broad specificity involved in protein degradation. The S.coelicolor proteasome is able to cleave oligopeptides after hydrophobic residues, but not after basic or acidic residues, thus displaying chymotrypsin-like activity but not trypsin-like activity. The sequence is that of Proteasome subunit alpha from Streptomyces coelicolor (strain ATCC BAA-471 / A3(2) / M145).